A 409-amino-acid chain; its full sequence is MEPNCVQFLENRTILVTGASGFLAKVLVERILRLQPNVKRLYLLVRASDKKSAEQRYDVALGINTFGAINVLNFAKKCVKPKLLLHVSTVYVCGERPGHIVEKHFAMGESLNGKNKVDINTERRLADQKSKQFKEQGCSEEETEQAMKDFGLKRARLYGWPNTYVFTKAMGEMLLGHYRETMPIVIIRPTIITSTFSDPFPGWIEGLKTVDSVIIFYGKGILKCFLVDQKTVCDIIPVDMVVNAMIAIAADHCHDSGSHTVYHVGSSNQNPVIYKQIYEMMSRYFMKSPLVGRNGMLIVPKVTRISTLARFRVYTNLRYKLPIQILGLLSVISLSQRDKFALHNRKFKMAMRLVKLYKPYVLFKGIFDDKNMETLRIKNEAKDMEKLFGTNPKCIDWEDYFMIRISLAS.

Belongs to the fatty acyl-CoA reductase family.

In Arabidopsis thaliana (Mouse-ear cress), this protein is Putative fatty acyl-CoA reductase 7 (FAR7).